A 400-amino-acid chain; its full sequence is Phosphoglycerate kinase (400 aa).

Substrate is bound by residues 22 to 24 (DFN), Arg-38, 61 to 64 (HLGR), Arg-119, and Arg-152. Residues Lys-205, Gly-296, Glu-327, and 353–356 (GGDT) each bind ATP.

It belongs to the phosphoglycerate kinase family. As to quaternary structure, monomer.

It is found in the cytoplasm. The enzyme catalyses (2R)-3-phosphoglycerate + ATP = (2R)-3-phospho-glyceroyl phosphate + ADP. It participates in carbohydrate degradation; glycolysis; pyruvate from D-glyceraldehyde 3-phosphate: step 2/5. This Campylobacter jejuni subsp. jejuni serotype O:23/36 (strain 81-176) protein is Phosphoglycerate kinase.